Reading from the N-terminus, the 373-residue chain is Gibberellin 3-beta-dioxygenase 2 (373 aa).

A Fe2OG dioxygenase domain is found at 203-304; the sequence is MTATVHLNWY…RVSLGYFLGP (102 aa). Tyr212 is a binding site for 2-oxoglutarate. Fe cation is bound by residues His227, Asp229, and His285. Arg295 and Ser297 together coordinate 2-oxoglutarate.

Belongs to the iron/ascorbate-dependent oxidoreductase family. It depends on L-ascorbate as a cofactor. The cofactor is Fe(2+). As to expression, highly expressed in elongating leaves. Expressed in unopened flowers. Expressed at low levels in leaf blades, shoots, rachis, stems and young panicles.

It carries out the reaction gibberellin A20 + 2-oxoglutarate + O2 = gibberellin A1 + succinate + CO2. Its pathway is plant hormone biosynthesis; gibberellin biosynthesis. Functionally, catalyzes the 3-beta-hydroxylation of the inactive gibberellin precursors, leading to the formation of bioactive gibberellins. In vitro, converts the precursors GA20, GA5, GA44 and GA9 to the corresponding 3-beta-hydroxylated active products GA1, GA3, GA38 and GA4, respectively. Involved in the production of bioactive GA for vegetative growth and development. Controls the elongation of the vegetative shoot and plant height by the regulation of active gibberellin levels. This Oryza sativa subsp. japonica (Rice) protein is Gibberellin 3-beta-dioxygenase 2.